We begin with the raw amino-acid sequence, 98 residues long: NADH-ubiquinone oxidoreductase chain 4L (98 aa).

3 helical membrane passes run 1–21, 29–49, and 61–81; these read MPIIYMNITLAFIISLLGMLV, SLLCLEGMMLSLFMMSTLMAL, and IALLVFAACEAAVGLALLVSI.

Belongs to the complex I subunit 4L family. In terms of assembly, core subunit of respiratory chain NADH dehydrogenase (Complex I) which is composed of 45 different subunits.

Its subcellular location is the mitochondrion inner membrane. It catalyses the reaction a ubiquinone + NADH + 5 H(+)(in) = a ubiquinol + NAD(+) + 4 H(+)(out). Core subunit of the mitochondrial membrane respiratory chain NADH dehydrogenase (Complex I) which catalyzes electron transfer from NADH through the respiratory chain, using ubiquinone as an electron acceptor. Part of the enzyme membrane arm which is embedded in the lipid bilayer and involved in proton translocation. This is NADH-ubiquinone oxidoreductase chain 4L (MT-ND4L) from Piliocolobus badius (Western red colobus).